A 525-amino-acid polypeptide reads, in one-letter code: Polyamine aminopropyltransferase 1 (525 aa).

A run of 6 helical transmembrane segments spans residues 21–41 (ALLV…ELIA), 53–73 (ILQF…GSWV), 89–109 (LELL…LLFA), 117–137 (LVLY…IPLV), 155–175 (VLTF…LVLA), and 180–200 (LVRT…WTLW). The 245-residue stretch at 220–464 (AGMVGAALLA…GEWGFILAAP (245 aa)) folds into the PABS domain. The tract at residues 222 to 471 (MVGAALLAGF…AAPGRADFRP (250 aa)) is spermidine synthase. S-methyl-5'-thioadenosine is bound at residue Gln-259. Spermidine-binding residues include His-289 and Asp-313. S-methyl-5'-thioadenosine contacts are provided by residues Asp-333 and 367 to 368 (DA). The Proton acceptor role is filled by Asp-385.

The protein belongs to the spermidine/spermine synthase family. Homodimer or homotetramer.

It is found in the cell membrane. The enzyme catalyses S-adenosyl 3-(methylsulfanyl)propylamine + putrescine = S-methyl-5'-thioadenosine + spermidine + H(+). It participates in amine and polyamine biosynthesis; spermidine biosynthesis; spermidine from putrescine: step 1/1. Its function is as follows. Catalyzes the irreversible transfer of a propylamine group from the amino donor S-adenosylmethioninamine (decarboxy-AdoMet) to putrescine (1,4-diaminobutane) to yield spermidine. The protein is Polyamine aminopropyltransferase 1 of Ralstonia nicotianae (strain ATCC BAA-1114 / GMI1000) (Ralstonia solanacearum).